An 87-amino-acid chain; its full sequence is Cell division topological specificity factor (87 aa).

It belongs to the MinE family.

In terms of biological role, prevents the cell division inhibition by proteins MinC and MinD at internal division sites while permitting inhibition at polar sites. This ensures cell division at the proper site by restricting the formation of a division septum at the midpoint of the long axis of the cell. This chain is Cell division topological specificity factor, found in Herpetosiphon aurantiacus (strain ATCC 23779 / DSM 785 / 114-95).